Reading from the N-terminus, the 286-residue chain is Ribosome maturation factor RimP (286 aa).

Residues 200–224 are compositionally biased toward acidic residues; that stretch reads LDGEDGDDTGVDAGDPDQDDADDAL. Residues 200 to 286 form a disordered region; that stretch reads LDGEDGDDTG…ANASTVKETH (87 aa). Basic residues predominate over residues 248–267; it reads VGRKAKGKKASPKKSNAKKK. Polar residues predominate over residues 273 to 286; it reads AASSANASTVKETH.

The protein belongs to the RimP family.

The protein localises to the cytoplasm. In terms of biological role, required for maturation of 30S ribosomal subunits. This Xanthobacter autotrophicus (strain ATCC BAA-1158 / Py2) protein is Ribosome maturation factor RimP.